A 222-amino-acid chain; its full sequence is Eukaryotic translation initiation factor 3 subunit K (222 aa).

The region spanning 46–208 is the PCI domain; sequence YDLEANLAVL…KIKTKNITEK (163 aa).

This sequence belongs to the eIF-3 subunit K family. Component of the eukaryotic translation initiation factor 3 (eIF-3) complex. The eIF-3 complex interacts with pix.

It is found in the cytoplasm. Its function is as follows. Component of the eukaryotic translation initiation factor 3 (eIF-3) complex, which is involved in protein synthesis of a specialized repertoire of mRNAs and, together with other initiation factors, stimulates binding of mRNA and methionyl-tRNAi to the 40S ribosome. The eIF-3 complex specifically targets and initiates translation of a subset of mRNAs involved in cell proliferation. In Drosophila persimilis (Fruit fly), this protein is Eukaryotic translation initiation factor 3 subunit K.